Here is a 322-residue protein sequence, read N- to C-terminus: Mas-related G-protein coupled receptor member X1 (322 aa).

Residues 1-31 (MDPTISTLDTELTPINGTEETLCYKQTLSLT) are Extracellular-facing. Residue Asn16 is glycosylated (N-linked (GlcNAc...) asparagine). The chain crosses the membrane as a helical span at residues 32–52 (VLTCIVSLVGLTGNAVVLWLL). The Cytoplasmic segment spans residues 53–67 (GCRMRRNAFSIYILN). The helical transmembrane segment at 68 to 88 (LAAADFLFLSGRLIYSLLSFI) threads the bilayer. Residues 89–96 (SIPHTISK) are Extracellular-facing. Residues 97–117 (ILYPVMMFSYFAGLSFLSAVS) traverse the membrane as a helical segment. At 118 to 144 (TERCLSVLWPIWYRCHRPTHLSAVVCV) the chain is on the cytoplasmic side. The helical transmembrane segment at 145-165 (LLWALSLLRSILEWMLCGFLF) threads the bilayer. Over 166 to 177 (SGADSAWCQTSD) the chain is Extracellular. A helical membrane pass occupies residues 178-198 (FITVAWLIFLCVVLCGSSLVL). Residues 199 to 221 (LIRILCGSRKIPLTRLYVTILLT) lie on the Cytoplasmic side of the membrane. The helical transmembrane segment at 222–242 (VLVFLLCGLPFGIQFFLFLWI) threads the bilayer. Residues 243–254 (HVDREVLFCHVH) lie on the Extracellular side of the membrane. A helical transmembrane segment spans residues 255-275 (LVSIFLSALNSSANPIIYFFV). Residues 276 to 322 (GSFRQRQNRQNLKLVLQRALQDASEVDEGGGQLPEEILELSGSRLEQ) are Cytoplasmic-facing.

It belongs to the G-protein coupled receptor 1 family. Mas subfamily. In terms of tissue distribution, uniquely localized in a subset of small dorsal root and trigeminal sensory neurons.

It localises to the cell membrane. Functionally, orphan receptor. Probably involved in the function of nociceptive neurons. May regulate nociceptor function and/or development, including the sensation or modulation of pain. Potently activated by enkephalins including BAM22 (bovine adrenal medulla peptide 22) and BAM (8-22). BAM22 is the most potent compound and evoked a large and dose-dependent release of intracellular calcium in stably transfected cells. G(alpha)q proteins are involved in the calcium-signaling pathway. Activated by the antimalarial drug, chloroquine. May mediate chloroquine-induced itch, in a histamine-independent manner. This chain is Mas-related G-protein coupled receptor member X1 (MRGPRX1), found in Homo sapiens (Human).